The following is a 190-amino-acid chain: dITP/XTP pyrophosphatase (190 aa).

A substrate-binding site is contributed by 10 to 15 (TTNKHK). Residues E39 and D68 each coordinate Mg(2+). The active-site Proton acceptor is the D68. Substrate-binding positions include A69, 143 to 146 (FGYD), K166, and 171 to 172 (HR).

It belongs to the HAM1 NTPase family. As to quaternary structure, homodimer. Mg(2+) is required as a cofactor.

It catalyses the reaction XTP + H2O = XMP + diphosphate + H(+). The enzyme catalyses dITP + H2O = dIMP + diphosphate + H(+). The catalysed reaction is ITP + H2O = IMP + diphosphate + H(+). Pyrophosphatase that catalyzes the hydrolysis of nucleoside triphosphates to their monophosphate derivatives, with a high preference for the non-canonical purine nucleotides XTP (xanthosine triphosphate), dITP (deoxyinosine triphosphate) and ITP. Seems to function as a house-cleaning enzyme that removes non-canonical purine nucleotides from the nucleotide pool, thus preventing their incorporation into DNA/RNA and avoiding chromosomal lesions. This is dITP/XTP pyrophosphatase from Hyperthermus butylicus (strain DSM 5456 / JCM 9403 / PLM1-5).